Consider the following 294-residue polypeptide: Acetyl-coenzyme A carboxylase carboxyl transferase subunit beta (294 aa).

In terms of domain architecture, CoA carboxyltransferase N-terminal spans 25 to 294; the sequence is VWTKCTSCEQ…PLVVPVDGSH (270 aa). Zn(2+)-binding residues include C29, C32, C48, and C51. Residues 29–51 form a C4-type zinc finger; sequence CTSCEQVLYSAELERNLEVCPKC.

Belongs to the AccD/PCCB family. In terms of assembly, acetyl-CoA carboxylase is a heterohexamer composed of biotin carboxyl carrier protein (AccB), biotin carboxylase (AccC) and two subunits each of ACCase subunit alpha (AccA) and ACCase subunit beta (AccD). Requires Zn(2+) as cofactor.

The protein resides in the cytoplasm. The enzyme catalyses N(6)-carboxybiotinyl-L-lysyl-[protein] + acetyl-CoA = N(6)-biotinyl-L-lysyl-[protein] + malonyl-CoA. The protein operates within lipid metabolism; malonyl-CoA biosynthesis; malonyl-CoA from acetyl-CoA: step 1/1. In terms of biological role, component of the acetyl coenzyme A carboxylase (ACC) complex. Biotin carboxylase (BC) catalyzes the carboxylation of biotin on its carrier protein (BCCP) and then the CO(2) group is transferred by the transcarboxylase to acetyl-CoA to form malonyl-CoA. The chain is Acetyl-coenzyme A carboxylase carboxyl transferase subunit beta from Aliivibrio fischeri (strain MJ11) (Vibrio fischeri).